We begin with the raw amino-acid sequence, 607 residues long: Putative pentatricopeptide repeat-containing protein At1g09680 (607 aa).

PPR repeat units lie at residues 239–273 (NVYV…SLQP), 274–308 (TVVS…RTRP), 309–343 (DVFT…GLIP), 344–378 (NDVI…GLQP), 379–413 (DIVL…GLRP), 414–448 (DKIT…GIEL), 449–483 (DRVG…GIKP), 484–518 (DDVT…GHVP), and 519–553 (SVVT…GVVP).

It belongs to the PPR family. P subfamily.

In Arabidopsis thaliana (Mouse-ear cress), this protein is Putative pentatricopeptide repeat-containing protein At1g09680.